A 244-amino-acid chain; its full sequence is uncharacterized protein (244 aa).

A signal peptide spans 1-18 (MQFSVLCKFLLLVTAVMA). Residues 19–223 (QTEYTPGFTT…TTIPSSAVHY (205 aa)) are Lumenal-facing. 2 stretches are compositionally biased toward low complexity: residues 55 to 65 (ETSTHSVTSTN) and 75 to 128 (TSHN…TTHV). The disordered stretch occupies residues 55–128 (ETSTHSVTST…TTVVPPTTHV (74 aa)). Residues 224–244 (ASPSGLLALVVMLISAFAFLA) form a helical membrane-spanning segment.

It localises to the endoplasmic reticulum membrane. This is an uncharacterized protein from Schizosaccharomyces pombe (strain 972 / ATCC 24843) (Fission yeast).